Here is a 160-residue protein sequence, read N- to C-terminus: Arsenate reductase 2.1 (160 aa).

Positions 42 to 143 (SNPRVAIIDV…WELSGQPVCR (102 aa)) constitute a Rhodanese domain. The active-site Cysteine persulfide intermediate is the Cys-94.

It catalyses the reaction [glutaredoxin]-dithiol + arsenate + glutathione + H(+) = glutathionyl-S-S-[glutaredoxin] + arsenite + H2O. In terms of biological role, possesses arsenate reductase activity in vitro. Catalyzes the reduction of arsenate [As(V)] to arsenite [As(III)]. May play a role in arsenic retention in roots. Functionally, possesses phosphatase activity towards p-nitrophenyl phosphate in vitro. This chain is Arsenate reductase 2.1 (ACR2.1), found in Oryza sativa subsp. japonica (Rice).